The sequence spans 148 residues: Large ribosomal subunit protein uL15 (148 aa).

Basic residues predominate over residues 1–30 (MPSRLRKTRKLRGHVSHGHGRIGKHRKHPG). The segment at 1–37 (MPSRLRKTRKLRGHVSHGHGRIGKHRKHPGGRGNAGG) is disordered. At His-39 the chain carries (3S)-3-hydroxyhistidine. Residues Lys-47 and Lys-55 each carry the N6-acetyllysine modification. Phosphoserine is present on Ser-68. Lys-110 carries the post-translational modification N6-acetyllysine.

Belongs to the universal ribosomal protein uL15 family. In terms of assembly, component of the large ribosomal subunit. Hydroxylated on His-39 by MINA.

Its subcellular location is the cytoplasm. Functionally, component of the large ribosomal subunit. The ribosome is a large ribonucleoprotein complex responsible for the synthesis of proteins in the cell. This is Large ribosomal subunit protein uL15 (RPL27A) from Bos taurus (Bovine).